A 376-amino-acid polypeptide reads, in one-letter code: MSKRDYYEVLGAAKDASAQDLKKAYRRLAMKYHPDRNPDDKEALAKFKEAKEAYEVLADEQKRAAYDQFGHAGVNGQGGGPGAGAGAGGFGDIFGDIFGDIFGGAGGGGGRRGPSRGADLRYTLELSLEQAVRGCDEKIRIPTWDSCDVCHGSGAKEGSQPVTCTTCGGVGQVRMQQGFFTVQQACPTCKGEGKIIKDPCGNCGGQGRVQNTKTLSVKIPAGVDTGDRIRLAGEGEAGVHGAPSGDLYVQVAVREHDIFQRDGDNLYCEVPISFVDATLGGELDVPTLNGKVKLKVPAETQSGKLFRLRGKGVAPVRGGAPGDLLCKVVIETPVKLSSEQKELLRKFQESLESGGNRHNPRKNNWFEGVKRFFDTK.

The J domain occupies 5–70 (DYYEVLGAAK…QKRAAYDQFG (66 aa)). A CR-type zinc finger spans residues 134 to 212 (GCDEKIRIPT…CGGQGRVQNT (79 aa)). 8 residues coordinate Zn(2+): C147, C150, C164, C167, C186, C189, C200, and C203. CXXCXGXG motif repeat units follow at residues 147-154 (CDVCHGSG), 164-171 (CTTCGGVG), 186-193 (CPTCKGEG), and 200-207 (CGNCGGQG).

This sequence belongs to the DnaJ family. Homodimer. Requires Zn(2+) as cofactor.

It is found in the cytoplasm. In terms of biological role, participates actively in the response to hyperosmotic and heat shock by preventing the aggregation of stress-denatured proteins and by disaggregating proteins, also in an autonomous, DnaK-independent fashion. Unfolded proteins bind initially to DnaJ; upon interaction with the DnaJ-bound protein, DnaK hydrolyzes its bound ATP, resulting in the formation of a stable complex. GrpE releases ADP from DnaK; ATP binding to DnaK triggers the release of the substrate protein, thus completing the reaction cycle. Several rounds of ATP-dependent interactions between DnaJ, DnaK and GrpE are required for fully efficient folding. Also involved, together with DnaK and GrpE, in the DNA replication of plasmids through activation of initiation proteins. The chain is Chaperone protein DnaJ from Alcanivorax borkumensis (strain ATCC 700651 / DSM 11573 / NCIMB 13689 / SK2).